A 787-amino-acid chain; its full sequence is MVDFAKSLFGFGNYKKESSSQSPTPPPSAHSSQEQHHKSNTEEYPQSHLSQQQHSHRYQPPHMSEQSHQFPQQQQQQQQSGTNKFFPKTLVSAAPTTAVANHSSVYGTTSTTTNNYPEAYLNQTFKNNIYNPQQQQQQQAQQPPPEQQQSSAPYQNSANIQQPYGNQWGSSQDQDANIITIDKTGNKLSPASRDSPIKGKLKVTILEAKDIFATQPYVVCSFESSEFVTNAPDSYGKSPVSSFGHNNNQGHNGPRNMYNSNHGPSPKALPMKNSGNLFGQRPSMYQRQLSTPHLNLPNDSSNPIWNHDTIFDVVGSKSELDISVYDGARDDAFLGHVRISPSTDKNNKNESEWLQLGARITGETVSSGHIKIKWEYTSFDNNIKRSYGPDDFHFLRLLGKGTFGQVFQVRKKDTNRVYAMKILSKKVIVKKKEIAHTIGERNILVRTSAASSPFIVGLKFSFQTPSDLFLVTDFMSGGELFFHLQKEGRFNEDRSKFYTAELILALEHLHDNDIVYRDLKPENILLDANGHIALCDFGLSKADLNMDGTTNTFCGTTEYLAPEVLLDEQGYTKMVDFWSLGVLIFEMTCGWSPFHAENTQQMYKNIAFGKVRFPKDVLSPEGRSFVKGLLNRNPKHRLGATDDARELKAHPFFADIDWDLLRAKNIPPPFKPHIVSETDISNFDTEFTSENTSALKRQMEMATTPLSPGIQANFKGFTYVDDSTMDDHFARSYRANAFRPPGSFIPGDPNLPPDEEVLAEQIEEEDEMEVDEDQHMDDEFVNGRFDL.

3 disordered regions span residues 1–82, 132–172, and 238–280; these read MVDF…QSGT, PQQQ…GSSQ, and SPVS…LFGQ. Over residues 132–155 the composition is skewed to low complexity; the sequence is PQQQQQQQAQQPPPEQQQSSAPYQ. Polar residues-rich tracts occupy residues 156 to 172 and 239 to 263; these read NSAN…GSSQ and PVSS…SNHG. The 173-residue stretch at 182–354 folds into the C2 domain; it reads DKTGNKLSPA…KNNKNESEWL (173 aa). Residues 392 to 653 enclose the Protein kinase domain; that stretch reads FHFLRLLGKG…ARELKAHPFF (262 aa). ATP-binding positions include 398–406 and Lys421; that span reads LGKGTFGQV. Asp518 serves as the catalytic Proton acceptor. Residues 654–729 enclose the AGC-kinase C-terminal domain; sequence ADIDWDLLRA…VDDSTMDDHF (76 aa).

Belongs to the protein kinase superfamily. AGC Ser/Thr protein kinase family. cAMP subfamily.

It carries out the reaction L-seryl-[protein] + ATP = O-phospho-L-seryl-[protein] + ADP + H(+). It catalyses the reaction L-threonyl-[protein] + ATP = O-phospho-L-threonyl-[protein] + ADP + H(+). Protein kinase that is part of growth control pathway which is at least partially redundant with the cAMP pathway. Plays a role in filamentous growth and virulence. Prevents hypha formation specifically under hypoxia at high CO(2) levels. Required for chlamydospore formation, distinctive morphological feature of the fungal pathogen C.albicans that can be induced to form in oxygen-limited environments and has been reported in clinical specimens. The protein is Serine/threonine-protein kinase SCH9 (SCH9) of Candida albicans (strain SC5314 / ATCC MYA-2876) (Yeast).